Reading from the N-terminus, the 252-residue chain is PF03932 family protein CutC (252 aa).

It belongs to the CutC family.

Its subcellular location is the cytoplasm. This is PF03932 family protein CutC from Serratia proteamaculans (strain 568).